A 301-amino-acid chain; its full sequence is GTPase Era (301 aa).

The region spanning 11 to 180 is the Era-type G domain; the sequence is RSGIITLVGR…KDVFFENCLN (170 aa). A G1 region spans residues 19 to 26; the sequence is GRPNVGKS. 19 to 26 contributes to the GTP binding site; sequence GRPNVGKS. The interval 45 to 49 is G2; it reads QTTRR. The tract at residues 66–69 is G3; it reads DTPG. Residues 66-70 and 129-132 each bind GTP; these read DTPGI and TKID. Positions 129–132 are G4; the sequence is TKID. Residues 159 to 161 are G5; the sequence is VSA. Residues 210 to 286 enclose the KH type-2 domain; sequence LEQEIPHSLL…YLRLIVKVVK (77 aa).

Belongs to the TRAFAC class TrmE-Era-EngA-EngB-Septin-like GTPase superfamily. Era GTPase family. As to quaternary structure, monomer.

It is found in the cytoplasm. Its subcellular location is the cell membrane. An essential GTPase that binds both GDP and GTP, with rapid nucleotide exchange. Plays a role in 16S rRNA processing and 30S ribosomal subunit biogenesis and possibly also in cell cycle regulation and energy metabolism. This is GTPase Era from Tropheryma whipplei (strain TW08/27) (Whipple's bacillus).